The following is a 160-amino-acid chain: Phosphopantetheine adenylyltransferase (160 aa).

Position 9 (Thr9) interacts with substrate. ATP contacts are provided by residues 9–10 and His17; that span reads TF. Substrate is bound by residues Lys41, Leu73, and Arg87. ATP is bound by residues 88 to 90, Glu98, and 123 to 129; these read GLR and YSFISST.

This sequence belongs to the bacterial CoaD family. In terms of assembly, homohexamer. Mg(2+) is required as a cofactor.

The protein localises to the cytoplasm. It carries out the reaction (R)-4'-phosphopantetheine + ATP + H(+) = 3'-dephospho-CoA + diphosphate. It participates in cofactor biosynthesis; coenzyme A biosynthesis; CoA from (R)-pantothenate: step 4/5. Reversibly transfers an adenylyl group from ATP to 4'-phosphopantetheine, yielding dephospho-CoA (dPCoA) and pyrophosphate. The protein is Phosphopantetheine adenylyltransferase of Ectopseudomonas mendocina (strain ymp) (Pseudomonas mendocina).